The following is a 229-amino-acid chain: Heptaprenylglyceryl phosphate synthase (229 aa).

Lys-12 is a sn-glycerol 1-phosphate binding site. Residues Asp-14 and Thr-40 each coordinate Mg(2+). Sn-glycerol 1-phosphate is bound by residues 159-164 (YIEYSG), Gly-189, and 209-210 (GN).

It belongs to the GGGP/HepGP synthase family. Group I subfamily. As to quaternary structure, homodimer. Requires Mg(2+) as cofactor.

It catalyses the reaction sn-glycerol 1-phosphate + all-trans-heptaprenyl diphosphate = 3-heptaprenyl-sn-glycero-1-phosphate + diphosphate. Its pathway is membrane lipid metabolism; glycerophospholipid metabolism. Functionally, prenyltransferase that catalyzes in vivo the transfer of the heptaprenyl moiety of heptaprenyl pyrophosphate (HepPP; 35 carbon atoms) to the C3 hydroxyl of sn-glycerol-1-phosphate (G1P), producing heptaprenylglyceryl phosphate (HepGP). This reaction is an ether-bond-formation step in the biosynthesis of archaea-type G1P-based membrane lipids found in Bacillales. This chain is Heptaprenylglyceryl phosphate synthase, found in Staphylococcus saprophyticus subsp. saprophyticus (strain ATCC 15305 / DSM 20229 / NCIMB 8711 / NCTC 7292 / S-41).